Here is a 152-residue protein sequence, read N- to C-terminus: Cytochrome c-type biogenesis CcmH-like mitochondrial protein (152 aa).

At Met-1–Gln-83 the chain is on the mitochondrial intermembrane side. Heme contacts are provided by Cys-26 and Cys-29. The helical transmembrane segment at Thr-84–Tyr-104 threads the bilayer. At Lys-105–Lys-152 the chain is on the mitochondrial matrix side.

Belongs to the CcmH/CycL/Ccl2/NrfF family.

It localises to the mitochondrion inner membrane. In terms of biological role, plays a role in mitochondrial cytochrome c maturation. Probable component of a heme lyase complex involved in the reduction of apocytochrome c. The protein is Cytochrome c-type biogenesis CcmH-like mitochondrial protein of Oryza sativa subsp. indica (Rice).